A 118-amino-acid chain; its full sequence is MPFVELETNLPAERLPPGLPLKLCEATATILGKPAERVNVTVRSGMPMVLAGSAEPCAQLLVSSIGVVGSAQQNQGHSARFFDFLTTELGLGPERIVIRFYPLEPWQIGKNRTVMTFL.

Proline 2 is subject to N-acetylproline.

This sequence belongs to the MIF family. As to quaternary structure, homotrimer.

The protein resides in the cytoplasm. The catalysed reaction is D-dopachrome + H(+) = 5,6-dihydroxyindole + CO2. Its function is as follows. Tautomerization of D-dopachrome with decarboxylation to give 5,6-dihydroxyindole (DHI). The chain is D-dopachrome decarboxylase (DDT) from Gallus gallus (Chicken).